Consider the following 329-residue polypeptide: 4-hydroxythreonine-4-phosphate dehydrogenase (329 aa).

Substrate-binding residues include H136 and T137. A divalent metal cation-binding residues include H166, H211, and H266. Positions 274, 283, and 292 each coordinate substrate.

This sequence belongs to the PdxA family. As to quaternary structure, homodimer. It depends on Zn(2+) as a cofactor. Mg(2+) is required as a cofactor. Requires Co(2+) as cofactor.

The protein localises to the cytoplasm. The catalysed reaction is 4-(phosphooxy)-L-threonine + NAD(+) = 3-amino-2-oxopropyl phosphate + CO2 + NADH. It participates in cofactor biosynthesis; pyridoxine 5'-phosphate biosynthesis; pyridoxine 5'-phosphate from D-erythrose 4-phosphate: step 4/5. Catalyzes the NAD(P)-dependent oxidation of 4-(phosphooxy)-L-threonine (HTP) into 2-amino-3-oxo-4-(phosphooxy)butyric acid which spontaneously decarboxylates to form 3-amino-2-oxopropyl phosphate (AHAP). This chain is 4-hydroxythreonine-4-phosphate dehydrogenase, found in Shigella sonnei (strain Ss046).